Here is a 387-residue protein sequence, read N- to C-terminus: 3-ketoacyl-CoA thiolase (387 aa).

The active-site Acyl-thioester intermediate is cysteine 91. Residues histidine 343 and cysteine 373 each act as proton acceptor in the active site.

The protein belongs to the thiolase-like superfamily. Thiolase family. Heterotetramer of two alpha chains (FadB) and two beta chains (FadA).

The protein localises to the cytoplasm. It catalyses the reaction an acyl-CoA + acetyl-CoA = a 3-oxoacyl-CoA + CoA. The protein operates within lipid metabolism; fatty acid beta-oxidation. In terms of biological role, catalyzes the final step of fatty acid oxidation in which acetyl-CoA is released and the CoA ester of a fatty acid two carbons shorter is formed. The protein is 3-ketoacyl-CoA thiolase of Shigella dysenteriae serotype 1 (strain Sd197).